The following is a 427-amino-acid chain: BTB/POZ domain-containing protein KCTD16 (427 aa).

Positions Glu-25 to Asp-98 constitute a BTB domain. Tyr-112 carries the phosphotyrosine modification. Ser-130, Ser-137, Ser-143, and Ser-146 each carry phosphoserine.

Homopentamer; forms an open pentamer. In contrast to other BTB domain-containing proteins, does not interact with CUL3. Interacts as a tetramer with GABBR1 and GABBR2. In terms of tissue distribution, expressed in the brain, mainly in the hippocampus.

It is found in the presynaptic cell membrane. The protein resides in the postsynaptic cell membrane. Auxiliary subunit of GABA-B receptors that determine the pharmacology and kinetics of the receptor response. Increases agonist potency and markedly alter the G-protein signaling of the receptors by accelerating onset and promoting desensitization. This is BTB/POZ domain-containing protein KCTD16 (Kctd16) from Mus musculus (Mouse).